The primary structure comprises 817 residues: MAHLLLHGTLEATILEADHLSNPTRATGAAPGIFRKFVEGFEDSLGLGKGATRLYATIDLGRARVGRTRVVDDEPVNPRWYEVFHIYCAHFAADVVFSVKAAQPIGATLIGRAYLPVRELLSGEAIERRLDILDAGRRRISHGPTIHVRLQFRDVAGDRHGWGRGVSGARYPGVPYTFFSQRPGCRVTLYQDAHVPDAFAPRIPLAGGGYYRQGRCWEDVFDAISNAKHLIYLTGWSVYTEITLIRDGTRQRPGGDATLGELLKRKASEGVRVLLLVWDDRTSVESLGMKWGFMSTHDAETADYFRGTDVRCVLCPRNPDAGRSAIMGAQIAYMITHHQKTVIVDHDMPVPRGGGSRRIVSFVGGLDLCDGRYDTQFHSLFRTLDTAHHSDFHQPNLDGAAVTKGGPREPWHDIHSKIEGPAAWDVLYNFEQRWRKQGGDKDLLLDLKAMADLIIPPSPVMFPDDGEAWSVQLFRSIDGGACFGFPSTPEAAARSGLVSGKNNTIDRSIQDAYIHAIRRAKNFIYIENQYFLGSSFAWKADGIRPEDIEALHLIPREISLKIVNKIEAGERFAVYVVLPMWPEGPPASGSVQAILDWQRRTMEMMYYDIAVALEAKRINADPRDYLTFFCLGNREVKLNGEYEPAGRPLDGTDYAKAQKARRFMIYVHSKMMIVDDEYIIVGSANINQRSMDGGRDSEIAMGAFQPCHLNTKGLVARGQIHGFRMSLWYEHLGMLHDNFLNPESLECVQRVNKMADKYWDLYASDELNDDLPGHLLTYPVRVTKEGTVTELPGAKFFPDTQAPVIGTKGNLPPFLTT.

Residues 1-130 form the C2 domain; sequence MAHLLLHGTL…LSGEAIERRL (130 aa). Position 192 (Asp-192) interacts with Ca(2+). The 40-residue stretch at 333 to 372 folds into the PLD phosphodiesterase 1 domain; sequence YMITHHQKTVIVDHDMPVPRGGGSRRIVSFVGGLDLCDGR. Catalysis depends on residues His-338, Lys-340, and Asp-345. His-338 contacts a 1,2-diacyl-sn-glycero-3-phosphate. 2 residues coordinate Ca(2+): His-378 and His-412. A 1,2-diacyl-sn-glycero-3-phosphate is bound by residues Gln-529 and His-668. The PLD phosphodiesterase 2 domain occupies 663–690; sequence FMIYVHSKMMIVDDEYIIVGSANINQRS. Active-site residues include His-668, Lys-670, and Asp-675. Ca(2+) is bound at residue Glu-730.

It belongs to the phospholipase D family. C2-PLD subfamily. It depends on Ca(2+) as a cofactor.

It carries out the reaction a 1,2-diacyl-sn-glycero-3-phosphocholine + H2O = a 1,2-diacyl-sn-glycero-3-phosphate + choline + H(+). Its function is as follows. Hydrolyzes glycerol-phospholipids at the terminal phosphodiesteric bond. Plays an important role in various cellular processes. In Oryza sativa subsp. japonica (Rice), this protein is Phospholipase D alpha 2 (PLD2).